A 192-amino-acid chain; its full sequence is GTP cyclohydrolase 1 (192 aa).

Zn(2+) contacts are provided by Cys-76, His-79, and Cys-148.

This sequence belongs to the GTP cyclohydrolase I family. As to quaternary structure, toroid-shaped homodecamer, composed of two pentamers of five dimers.

It carries out the reaction GTP + H2O = 7,8-dihydroneopterin 3'-triphosphate + formate + H(+). The protein operates within cofactor biosynthesis; 7,8-dihydroneopterin triphosphate biosynthesis; 7,8-dihydroneopterin triphosphate from GTP: step 1/1. This is GTP cyclohydrolase 1 from Carboxydothermus hydrogenoformans (strain ATCC BAA-161 / DSM 6008 / Z-2901).